Here is a 548-residue protein sequence, read N- to C-terminus: CTP synthase (548 aa).

The amidoligase domain stretch occupies residues 1-265 (MTRYIFVTGG…DDIICDKLRI (265 aa)). S13 is a binding site for CTP. S13 provides a ligand contact to UTP. ATP-binding positions include 14–19 (SLGKGI) and D71. Residues D71 and E139 each coordinate Mg(2+). CTP is bound by residues 146-148 (DIE), 186-191 (KTKPTQ), and K222. Residues 186–191 (KTKPTQ) and K222 contribute to the UTP site. Positions 290–541 (NIAMVGKYME…VNAALAYKAA (252 aa)) constitute a Glutamine amidotransferase type-1 domain. L-glutamine is bound at residue G351. The Nucleophile; for glutamine hydrolysis role is filled by C378. Residues 379-382 (LGMQ), E402, and R469 contribute to the L-glutamine site. Residues H514 and E516 contribute to the active site.

This sequence belongs to the CTP synthase family. As to quaternary structure, homotetramer.

The catalysed reaction is UTP + L-glutamine + ATP + H2O = CTP + L-glutamate + ADP + phosphate + 2 H(+). It carries out the reaction L-glutamine + H2O = L-glutamate + NH4(+). It catalyses the reaction UTP + NH4(+) + ATP = CTP + ADP + phosphate + 2 H(+). It functions in the pathway pyrimidine metabolism; CTP biosynthesis via de novo pathway; CTP from UDP: step 2/2. With respect to regulation, allosterically activated by GTP, when glutamine is the substrate; GTP has no effect on the reaction when ammonia is the substrate. The allosteric effector GTP functions by stabilizing the protein conformation that binds the tetrahedral intermediate(s) formed during glutamine hydrolysis. Inhibited by the product CTP, via allosteric rather than competitive inhibition. Functionally, catalyzes the ATP-dependent amination of UTP to CTP with either L-glutamine or ammonia as the source of nitrogen. Regulates intracellular CTP levels through interactions with the four ribonucleotide triphosphates. This Chromohalobacter salexigens (strain ATCC BAA-138 / DSM 3043 / CIP 106854 / NCIMB 13768 / 1H11) protein is CTP synthase.